A 196-amino-acid polypeptide reads, in one-letter code: Putative NADH dehydrogenase/NAD(P)H nitroreductase Pnuc_0932 (196 aa).

This sequence belongs to the nitroreductase family. HadB/RutE subfamily. It depends on FMN as a cofactor.

This is Putative NADH dehydrogenase/NAD(P)H nitroreductase Pnuc_0932 from Polynucleobacter asymbioticus (strain DSM 18221 / CIP 109841 / QLW-P1DMWA-1) (Polynucleobacter necessarius subsp. asymbioticus).